The sequence spans 293 residues: Bifunctional protein FolD (293 aa).

Residues 165–167, serine 190, and isoleucine 231 each bind NADP(+); that span reads GRS.

Belongs to the tetrahydrofolate dehydrogenase/cyclohydrolase family. Homodimer.

It carries out the reaction (6R)-5,10-methylene-5,6,7,8-tetrahydrofolate + NADP(+) = (6R)-5,10-methenyltetrahydrofolate + NADPH. The catalysed reaction is (6R)-5,10-methenyltetrahydrofolate + H2O = (6R)-10-formyltetrahydrofolate + H(+). The protein operates within one-carbon metabolism; tetrahydrofolate interconversion. In terms of biological role, catalyzes the oxidation of 5,10-methylenetetrahydrofolate to 5,10-methenyltetrahydrofolate and then the hydrolysis of 5,10-methenyltetrahydrofolate to 10-formyltetrahydrofolate. The polypeptide is Bifunctional protein FolD (Synechococcus sp. (strain CC9902)).